A 211-amino-acid polypeptide reads, in one-letter code: Ribosomal RNA small subunit methyltransferase G (211 aa).

Residues Gly73, 125–126 (IE), and Arg141 contribute to the S-adenosyl-L-methionine site.

The protein belongs to the methyltransferase superfamily. RNA methyltransferase RsmG family.

It localises to the cytoplasm. The catalysed reaction is guanosine(527) in 16S rRNA + S-adenosyl-L-methionine = N(7)-methylguanosine(527) in 16S rRNA + S-adenosyl-L-homocysteine. Its function is as follows. Specifically methylates the N7 position of guanine in position 527 of 16S rRNA. The chain is Ribosomal RNA small subunit methyltransferase G from Methylobacterium radiotolerans (strain ATCC 27329 / DSM 1819 / JCM 2831 / NBRC 15690 / NCIMB 10815 / 0-1).